Reading from the N-terminus, the 541-residue chain is MTDTLTFNTKHLLEALFESGIRHFIVSPGSRSTPIALLLAEYAEQNNEIKLFVDVDERSAGFFALGIAKTLLEPVVLLGTSGTAIAEYMPAVAEAYAANIPLVVLSTDRPQELQFNGAPQTIPQSNLFGQLTKQAVLIRLQDMHSDVTEYIDFIVQKVVNLSITAPRGPIQINLPLRKPLMPVLDRQDEVHVQRVVFDKQSVQYRLPPITAKRLLILAGPNVLNSYDDSLKKFAIKNNVPVIADVLSQSRHTYTIHGIDVLLQAHKINADLKPDLVVRFGKTPVSARVLQWLKEENILTWHVDEDAGVDHTRHIVRAIKMAPHDFLESMHLTLSKNQIDFNQKWLSLPKVIKTRNEMNIITALDDAVPDDTHIFVANSMPIRDMDNFFTGNHTQRIYANRGANGIDGVISSALGMSAVVKQRSVLLTGDLTLFHDMNGLMMAKNYQLPLDIIVINNNGGGIFSFLPQAGAPKYFEQLFGTPLNIDIKKIADLYYIDYHQLNVPEALSQILQTPSKTTRLIEYKSDHQRNRDDHREVLEMLK.

Belongs to the TPP enzyme family. MenD subfamily. In terms of assembly, homodimer. Mg(2+) is required as a cofactor. The cofactor is Mn(2+). Requires thiamine diphosphate as cofactor.

The catalysed reaction is isochorismate + 2-oxoglutarate + H(+) = 5-enolpyruvoyl-6-hydroxy-2-succinyl-cyclohex-3-ene-1-carboxylate + CO2. Its pathway is quinol/quinone metabolism; 1,4-dihydroxy-2-naphthoate biosynthesis; 1,4-dihydroxy-2-naphthoate from chorismate: step 2/7. It participates in quinol/quinone metabolism; menaquinone biosynthesis. Catalyzes the thiamine diphosphate-dependent decarboxylation of 2-oxoglutarate and the subsequent addition of the resulting succinic semialdehyde-thiamine pyrophosphate anion to isochorismate to yield 2-succinyl-5-enolpyruvyl-6-hydroxy-3-cyclohexene-1-carboxylate (SEPHCHC). The chain is 2-succinyl-5-enolpyruvyl-6-hydroxy-3-cyclohexene-1-carboxylate synthase from Leuconostoc mesenteroides subsp. mesenteroides (strain ATCC 8293 / DSM 20343 / BCRC 11652 / CCM 1803 / JCM 6124 / NCDO 523 / NBRC 100496 / NCIMB 8023 / NCTC 12954 / NRRL B-1118 / 37Y).